A 230-amino-acid chain; its full sequence is uncharacterized protein (230 aa).

The helical transmembrane segment at Gly19–Gly39 threads the bilayer. N-linked (GlcNAc...) asparagine; by host glycosylation occurs at Asn41. A helical transmembrane segment spans residues Ser55 to Cys75. N-linked (GlcNAc...) asparagine; by host glycans are attached at residues Asn86, Asn157, Asn168, and Asn182. A coiled-coil region spans residues Thr172–Asp196. Positions Gln178–Ser205 are disordered. Residues Asp180–Asp190 are compositionally biased toward acidic residues. Over residues Ile191–Ser201 the composition is skewed to basic and acidic residues.

Its subcellular location is the membrane. This is an uncharacterized protein from Acanthamoeba polyphaga mimivirus (APMV).